A 570-amino-acid chain; its full sequence is MEAPEEPAPVRGGPEATLEIHGSRFLRLSAFREELRALLVLAGPAFLVQLMVFLISFISSVFCGHLGKLELDAVTLAIAVINVTGVSVGFGLSSACDTLISQTYGSQNLKHVGVILQRSALILLLCCFPCWALFLNTQHILLLFRQDPDVSRLTQTYVTIFIPALPATFLYMLQVKYLLNQGIVLPQIVTGVAANLVNALANYLFLHQLHLGAIGSALANLISQYTLALLLFFYILGKKLHQATWGGWSLECLQDWASFLHLAVPSMLMLCMEWWAYEVGSFLSGILGMVELGAQSIVYELAIIVYMVPAGFSVAASVRVGNALGAGDMEQARKSSTVSLLITVLFAVAFSVLLLSCKDHVGYIFTTDRDIINLVAQVVPIYAVSHLFEALACTSGGVLRGSGNQKVGAIVNTIGYYVVGLPIGIALMFATKLGVMGLWSGIIICTVFQAVCFLGFIIQLNWKKACQQAQVHANLKVNNVPRSGNSALPQDPLHPGCPENLEGILTNDVGKTGETQSDQQMRQEEPLPEHPQDSAKLSRKQLVLRRGLLLLGVFLILLVGILVRFYVRIQ.

Methionine 1 bears the N-acetylmethionine mark. At 1–37 (MEAPEEPAPVRGGPEATLEIHGSRFLRLSAFREELRA) the chain is on the cytoplasmic side. The chain crosses the membrane as a helical span at residues 38–58 (LLVLAGPAFLVQLMVFLISFI). Topologically, residues 59 to 72 (SSVFCGHLGKLELD) are extracellular. The helical transmembrane segment at 73-93 (AVTLAIAVINVTGVSVGFGLS) threads the bilayer. The Cytoplasmic portion of the chain corresponds to 94-120 (SACDTLISQTYGSQNLKHVGVILQRSA). A helical membrane pass occupies residues 121–141 (LILLLCCFPCWALFLNTQHIL). Residues 142 to 152 (LLFRQDPDVSR) lie on the Extracellular side of the membrane. Residues 153–173 (LTQTYVTIFIPALPATFLYML) traverse the membrane as a helical segment. The Cytoplasmic segment spans residues 174–176 (QVK). A helical transmembrane segment spans residues 177 to 197 (YLLNQGIVLPQIVTGVAANLV). At 198-216 (NALANYLFLHQLHLGAIGS) the chain is on the extracellular side. Residues 217–237 (ALANLISQYTLALLLFFYILG) form a helical membrane-spanning segment. Topologically, residues 238–251 (KKLHQATWGGWSLE) are cytoplasmic. The helical transmembrane segment at 252-272 (CLQDWASFLHLAVPSMLMLCM) threads the bilayer. Residues 273 to 295 (EWWAYEVGSFLSGILGMVELGAQ) are Extracellular-facing. A helical membrane pass occupies residues 296-316 (SIVYELAIIVYMVPAGFSVAA). Topologically, residues 317 to 336 (SVRVGNALGAGDMEQARKSS) are cytoplasmic. A helical transmembrane segment spans residues 337–357 (TVSLLITVLFAVAFSVLLLSC). At 358–370 (KDHVGYIFTTDRD) the chain is on the extracellular side. A helical membrane pass occupies residues 371 to 391 (IINLVAQVVPIYAVSHLFEAL). The Cytoplasmic portion of the chain corresponds to 392-408 (ACTSGGVLRGSGNQKVG). A helical membrane pass occupies residues 409 to 429 (AIVNTIGYYVVGLPIGIALMF). The Extracellular portion of the chain corresponds to 430–437 (ATKLGVMG). The chain crosses the membrane as a helical span at residues 438-458 (LWSGIIICTVFQAVCFLGFII). Over 459–546 (QLNWKKACQQ…LSRKQLVLRR (88 aa)) the chain is Cytoplasmic. Residues 508 to 534 (DVGKTGETQSDQQMRQEEPLPEHPQDS) form a disordered region. Basic and acidic residues predominate over residues 521–533 (MRQEEPLPEHPQD). The chain crosses the membrane as a helical span at residues 547-567 (GLLLLGVFLILLVGILVRFYV). The Extracellular segment spans residues 568–570 (RIQ).

Belongs to the multi antimicrobial extrusion (MATE) (TC 2.A.66.1) family.

It is found in the cell membrane. The protein resides in the apical cell membrane. It catalyses the reaction thiamine(out) + H(+)(in) = thiamine(in) + H(+)(out). The catalysed reaction is estrone 3-sulfate(in) + H(+)(out) = estrone 3-sulfate(out) + H(+)(in). It carries out the reaction creatinine(in) + H(+)(out) = creatinine(out) + H(+)(in). The enzyme catalyses agmatine(in) + H(+)(out) = agmatine(out) + H(+)(in). In terms of biological role, multidrug efflux pump that functions as a H(+)/organic cation antiporter. Plays a physiological role in the excretion of cationic compounds including endogenous metabolites, drugs, toxins through the kidney and liver, into urine and bile respectively. Mediates the efflux of endogenous compounds such as creatinine, vitamin B1/thiamine, agmatine and estrone-3-sulfate. May also contribute to regulate the transport of cationic compounds in testis across the blood-testis-barrier. This is Multidrug and toxin extrusion protein 1 (SLC47A1) from Pongo abelii (Sumatran orangutan).